Reading from the N-terminus, the 309-residue chain is Pyridoxal kinase (309 aa).

T2 carries the post-translational modification N-acetylthreonine; in Pyridoxal kinase, N-terminally processed. The pyridoxal site is built by S23 and T58. Position 58 (T58) interacts with pyridoxal 5'-phosphate. D124 is a binding site for ATP. D124 contributes to the Na(+) binding site. Mg(2+) is bound at residue D129. T155 provides a ligand contact to Na(+). ATP is bound by residues 157–160 (NQFE), 193–194 (TS), 225–227 (IPA), and T232. T193 is a Na(+) binding site. 233-234 (GD) provides a ligand contact to pyridoxal 5'-phosphate. D234 functions as the Proton acceptor in the catalytic mechanism.

It belongs to the pyridoxine kinase family. In terms of assembly, homodimer. Zn(2+) is required as a cofactor. Expressed ubiquitously in leaves, stems, roots, flowers and siliques. Present in root hairs and other tip-growing cells such as papillar cells on the top of stigma.

It carries out the reaction pyridoxal + ATP = pyridoxal 5'-phosphate + ADP + H(+). Its pathway is cofactor metabolism; pyridoxal 5'-phosphate salvage; pyridoxal 5'-phosphate from pyridoxal: step 1/1. Catalyzes the transfer of a phosphate group from ATP to the 5-hydroxylmethyl group of pyridoxal to form the biologically active pyridoxal phosphate, an active form of vitamin B6. Required for Na(+) and K(+) homeostasis and for salt tolerance. Involved in root hair development, both for initiation and tip growth. This Arabidopsis thaliana (Mouse-ear cress) protein is Pyridoxal kinase.